We begin with the raw amino-acid sequence, 361 residues long: 3-dehydroquinate synthase (361 aa).

NAD(+) contacts are provided by residues 107–111 (GVIGD), 131–132 (TS), K144, and K153. Positions 186, 251, and 268 each coordinate Zn(2+).

The protein belongs to the sugar phosphate cyclases superfamily. Dehydroquinate synthase family. NAD(+) serves as cofactor. Co(2+) is required as a cofactor. The cofactor is Zn(2+).

It is found in the cytoplasm. The catalysed reaction is 7-phospho-2-dehydro-3-deoxy-D-arabino-heptonate = 3-dehydroquinate + phosphate. The protein operates within metabolic intermediate biosynthesis; chorismate biosynthesis; chorismate from D-erythrose 4-phosphate and phosphoenolpyruvate: step 2/7. Functionally, catalyzes the conversion of 3-deoxy-D-arabino-heptulosonate 7-phosphate (DAHP) to dehydroquinate (DHQ). The polypeptide is 3-dehydroquinate synthase (Synechocystis sp. (strain ATCC 27184 / PCC 6803 / Kazusa)).